A 275-amino-acid polypeptide reads, in one-letter code: 4-diphosphocytidyl-2-C-methyl-D-erythritol kinase (275 aa).

Lys-14 is a catalytic residue. 98-108 (PMGAGLGGGSS) is a binding site for ATP. The active site involves Asp-140.

This sequence belongs to the GHMP kinase family. IspE subfamily.

The enzyme catalyses 4-CDP-2-C-methyl-D-erythritol + ATP = 4-CDP-2-C-methyl-D-erythritol 2-phosphate + ADP + H(+). The protein operates within isoprenoid biosynthesis; isopentenyl diphosphate biosynthesis via DXP pathway; isopentenyl diphosphate from 1-deoxy-D-xylulose 5-phosphate: step 3/6. Its function is as follows. Catalyzes the phosphorylation of the position 2 hydroxy group of 4-diphosphocytidyl-2C-methyl-D-erythritol. This is 4-diphosphocytidyl-2-C-methyl-D-erythritol kinase from Francisella philomiragia subsp. philomiragia (strain ATCC 25017 / CCUG 19701 / FSC 153 / O#319-036).